The primary structure comprises 522 residues: Putative ribose/galactose/methyl galactoside import ATP-binding protein (522 aa).

ABC transporter domains follow at residues 7-244 and 254-498; these read LEMV…VGRE and PKLG…TGQA. 39-46 provides a ligand contact to ATP; that stretch reads GENGAGKS.

Belongs to the ABC transporter superfamily. Carbohydrate importer 2 (CUT2) (TC 3.A.1.2) family.

It localises to the cell membrane. It carries out the reaction D-ribose(out) + ATP + H2O = D-ribose(in) + ADP + phosphate + H(+). The enzyme catalyses D-galactose(out) + ATP + H2O = D-galactose(in) + ADP + phosphate + H(+). In terms of biological role, part of an ABC transporter complex involved in carbohydrate import. Could be involved in ribose, galactose and/or methyl galactoside import. Responsible for energy coupling to the transport system. The protein is Putative ribose/galactose/methyl galactoside import ATP-binding protein of Halalkalibacterium halodurans (strain ATCC BAA-125 / DSM 18197 / FERM 7344 / JCM 9153 / C-125) (Bacillus halodurans).